The following is a 195-amino-acid chain: ATP-dependent Clp protease proteolytic subunit (195 aa).

Serine 101 acts as the Nucleophile in catalysis. Histidine 126 is an active-site residue.

Belongs to the peptidase S14 family. In terms of assembly, component of the chloroplastic Clp protease core complex.

The protein localises to the plastid. Its subcellular location is the chloroplast stroma. The catalysed reaction is Hydrolysis of proteins to small peptides in the presence of ATP and magnesium. alpha-casein is the usual test substrate. In the absence of ATP, only oligopeptides shorter than five residues are hydrolyzed (such as succinyl-Leu-Tyr-|-NHMec, and Leu-Tyr-Leu-|-Tyr-Trp, in which cleavage of the -Tyr-|-Leu- and -Tyr-|-Trp bonds also occurs).. Functionally, cleaves peptides in various proteins in a process that requires ATP hydrolysis. Has a chymotrypsin-like activity. Plays a major role in the degradation of misfolded proteins. The sequence is that of ATP-dependent Clp protease proteolytic subunit from Cucumis sativus (Cucumber).